A 233-amino-acid polypeptide reads, in one-letter code: Proteasome subunit alpha (233 aa).

The protein belongs to the peptidase T1A family. In terms of assembly, the 20S proteasome core is composed of 14 alpha and 14 beta subunits that assemble into four stacked heptameric rings, resulting in a barrel-shaped structure. The two inner rings, each composed of seven catalytic beta subunits, are sandwiched by two outer rings, each composed of seven alpha subunits. The catalytic chamber with the active sites is on the inside of the barrel. Has a gated structure, the ends of the cylinder being occluded by the N-termini of the alpha-subunits. Is capped at one or both ends by the proteasome regulatory ATPase, PAN. Post-translationally, the N-terminus is blocked.

Its subcellular location is the cytoplasm. Its activity is regulated as follows. The formation of the proteasomal ATPase PAN-20S proteasome complex, via the docking of the C-termini of PAN into the intersubunit pockets in the alpha-rings, triggers opening of the gate for substrate entry. Interconversion between the open-gate and close-gate conformations leads to a dynamic regulation of the 20S proteasome proteolysis activity. Its function is as follows. Component of the proteasome core, a large protease complex with broad specificity involved in protein degradation. The T.acidophilum proteasome is able to cleave oligopeptides after Tyr, Leu, Phe, and to a lesser extent after Glu and Arg. Thus, displays chymotrypsin-like activity and low level of caspase-like and trypsin-like activities. The protein is Proteasome subunit alpha of Thermoplasma acidophilum (strain ATCC 25905 / DSM 1728 / JCM 9062 / NBRC 15155 / AMRC-C165).